The primary structure comprises 896 residues: Translation initiation factor IF-2 (896 aa).

Residues 1–260 (MDIENTNKPD…AQTNKKAHKA (260 aa)) form a disordered region. Positions 19-34 (KAADSKPESGKTDSKR) are enriched in basic and acidic residues. Positions 56–66 (EESSGGKASGK) are enriched in low complexity. A compositionally biased stretch (basic and acidic residues) spans 85-136 (SVKEKKPDERLEETKKTAPRFEDKKSDAPSAQNEKRSFDSAKKEEKQTERKK). Residues 168 to 177 (RGQGNRPQRP) show a composition bias toward low complexity. A tr-type G domain is found at 375–544 (PRPPVVTIMG…LLQAEVLELK (170 aa)). A G1 region spans residues 384 to 391 (GHVDHGKT). Residue 384 to 391 (GHVDHGKT) participates in GTP binding. The interval 409 to 413 (GITQH) is G2. A G3 region spans residues 430-433 (DTPG). Residues 430–434 (DTPGH) and 484–487 (NKVD) each bind GTP. Residues 484 to 487 (NKVD) form a G4 region. The segment at 520 to 522 (SAL) is G5. The segment at 877–896 (SDSEKYKAPEIKEEGTETDE) is disordered.

The protein belongs to the TRAFAC class translation factor GTPase superfamily. Classic translation factor GTPase family. IF-2 subfamily.

It localises to the cytoplasm. Its function is as follows. One of the essential components for the initiation of protein synthesis. Protects formylmethionyl-tRNA from spontaneous hydrolysis and promotes its binding to the 30S ribosomal subunits. Also involved in the hydrolysis of GTP during the formation of the 70S ribosomal complex. The protein is Translation initiation factor IF-2 of Treponema denticola (strain ATCC 35405 / DSM 14222 / CIP 103919 / JCM 8153 / KCTC 15104).